A 504-amino-acid chain; its full sequence is Maturase K (504 aa).

This sequence belongs to the intron maturase 2 family. MatK subfamily.

The protein localises to the plastid. It localises to the chloroplast. Its function is as follows. Usually encoded in the trnK tRNA gene intron. Probably assists in splicing its own and other chloroplast group II introns. In Gossypium turneri (Cotton), this protein is Maturase K.